The following is a 214-amino-acid chain: Adenylate kinase (214 aa).

Residue 10 to 15 (GAGKGT) participates in ATP binding. The interval 30-59 (STGDMLRGAIKAGTDLGKQAKTLMDAGQLV) is NMP. AMP is bound by residues Thr31, Arg36, 57-59 (QLV), 85-88 (GFPR), and Gln92. Residues 122 to 159 (GRRVHQASGRTYHVVYNPPKVEGKDDVTGEDLIIRADD) form an LID region. Residues Arg123 and 132–133 (TY) contribute to the ATP site. The AMP site is built by Arg156 and Arg167. Lys200 contributes to the ATP binding site.

The protein belongs to the adenylate kinase family. As to quaternary structure, monomer.

The protein resides in the cytoplasm. The catalysed reaction is AMP + ATP = 2 ADP. It participates in purine metabolism; AMP biosynthesis via salvage pathway; AMP from ADP: step 1/1. Its function is as follows. Catalyzes the reversible transfer of the terminal phosphate group between ATP and AMP. Plays an important role in cellular energy homeostasis and in adenine nucleotide metabolism. The protein is Adenylate kinase of Pasteurella multocida (strain Pm70).